An 833-amino-acid polypeptide reads, in one-letter code: RNA-binding protein 5-A (833 aa).

The interval 1–87 is disordered; the sequence is MGSDKRVSRS…GYHSDGDYMD (87 aa). One can recognise an RRM 1 domain in the interval 102–182; sequence KTIMLRGLPI…KTIAMHYSNP (81 aa). The RanBP2-type zinc-finger motif lies at 185–214; sequence KFEDWLCNKCGLYNFRRRLKCFRCGAAKAE. One can recognise an RRM 2 domain in the interval 241–325; the sequence is SAIILRNIGP…KTIGVDFAKS (85 aa). The span at 396–428 shows a compositional bias: polar residues; sequence TGAAEQGTAPQAESSSPVPATTSAVVCQSPQMY. 2 disordered regions span residues 396–458 and 523–559; these read TGAA…EEAA and AADG…TAQQ. Over residues 429–458 the composition is skewed to low complexity; the sequence is QQPGSPTQSSTSTVAASATPASGTSAEEAA. The C2H2-type zinc finger occupies 667–692; the sequence is LACLLCRRQFPNKDALTRHQQLSDLH. Residues 761 to 807 form the G-patch domain; that stretch reads NSNIGNKMLQAMGWKEGSGLGRKSQGITAPIQAQVRMRGAGLGAKGS.

The protein belongs to the RBM5/RBM10 family. In terms of assembly, component of the spliceosome A complex (also known as the prespliceosome). Appears to dissociate from the spliceosome upon formation of the spliceosome B complex (also known as the precatalytic spliceosome), in which the heterotrimeric U4/U6.U5 snRNPs are bound.

Its subcellular location is the nucleus. Functionally, component of the spliceosome A complex. Regulates alternative splicing of a number of mRNAs. May modulate splice site pairing after recruitment of the U1 and U2 snRNPs to the 5' and 3' splice sites of the intron. The sequence is that of RNA-binding protein 5-A (rbm5-a) from Xenopus laevis (African clawed frog).